Consider the following 126-residue polypeptide: Profilin (126 aa).

This sequence belongs to the profilin family. In terms of assembly, occurs in many kinds of cells as a complex with monomeric actin in a 1:1 ratio. In terms of tissue distribution, expressed in ovary and head.

Its subcellular location is the cytoplasm. The protein resides in the cytoskeleton. In terms of biological role, binds to actin and affects the structure of the cytoskeleton. At high concentrations, profilin prevents the polymerization of actin, whereas it enhances it at low concentrations. By binding to PIP2, it may inhibit the formation of IP3 and DG. This profilin is required for intercellular cytoplasm transport during Drosophila oogenesis. Function in neurons is essential for adult survival, and is important for climbing behavior and activity. The chain is Profilin (chic) from Drosophila melanogaster (Fruit fly).